Reading from the N-terminus, the 1574-residue chain is Multiple epidermal growth factor-like domains protein 6 (1574 aa).

Residues 1-27 form the signal peptide; it reads MPVRAEARAAWRVVALALLLLPAMPAA. One can recognise an EMI domain in the interval 40-122; sequence MPHVCAEQKL…QKPGQEGCLS (83 aa). 99 disulfides stabilise this stretch: Cys44–Cys108, Cys74–Cys80, Cys107–Cys120, Cys127–Cys138, Cys134–Cys147, Cys149–Cys162, Cys168–Cys179, Cys175–Cys188, Cys190–Cys203, Cys209–Cys220, Cys216–Cys230, Cys232–Cys245, Cys251–Cys262, Cys258–Cys271, Cys273–Cys286, Cys292–Cys303, Cys299–Cys312, Cys314–Cys327, Cys338–Cys349, Cys345–Cys358, Cys360–Cys373, Cys379–Cys389, Cys385–Cys398, Cys400–Cys411, Cys419–Cys430, Cys426–Cys439, Cys441–Cys454, Cys524–Cys537, Cys531–Cys544, Cys546–Cys555, Cys568–Cys580, Cys574–Cys587, Cys589–Cys598, Cys611–Cys623, Cys617–Cys630, Cys632–Cys641, Cys654–Cys668, Cys660–Cys675, Cys677–Cys686, Cys699–Cys711, Cys705–Cys718, Cys722–Cys731, Cys744–Cys755, Cys750–Cys762, Cys764–Cys773, Cys786–Cys799, Cys793–Cys806, Cys808–Cys817, Cys830–Cys842, Cys836–Cys849, Cys851–Cys860, Cys873–Cys886, Cys879–Cys893, Cys895–Cys904, Cys917–Cys929, Cys923–Cys936, Cys938–Cys947, Cys960–Cys972, Cys966–Cys979, Cys981–Cys990, Cys1003–Cys1015, Cys1009–Cys1022, Cys1024–Cys1033, Cys1046–Cys1058, Cys1052–Cys1065, Cys1067–Cys1076, Cys1089–Cys1101, Cys1095–Cys1108, Cys1110–Cys1119, Cys1132–Cys1144, Cys1138–Cys1151, Cys1153–Cys1162, Cys1175–Cys1187, Cys1181–Cys1194, Cys1196–Cys1205, Cys1218–Cys1231, Cys1224–Cys1238, Cys1240–Cys1249, Cys1262–Cys1274, Cys1268–Cys1281, Cys1283–Cys1292, Cys1305–Cys1317, Cys1311–Cys1324, Cys1326–Cys1335, Cys1348–Cys1360, Cys1354–Cys1367, Cys1369–Cys1378, Cys1391–Cys1403, Cys1397–Cys1410, Cys1412–Cys1421, Cys1434–Cys1446, Cys1440–Cys1453, Cys1455–Cys1464, Cys1477–Cys1489, Cys1483–Cys1496, Cys1498–Cys1507, Cys1520–Cys1532, Cys1526–Cys1539, and Cys1541–Cys1550. In terms of domain architecture, EGF-like 1; calcium-binding spans 123 to 163; sequence DVDECASANGGCEGPCCNTVGGFYCRCPPGYQLQGDGKTCQ. Positions 164 to 204 constitute an EGF-like 2; calcium-binding domain; the sequence is DVDECRAHNGGCQHRCVNTPGSYLCECKPGFRLHTDGRTCL. EGF-like domains are found at residues 205-246 and 247-287; these read AISS…RRCV and RRSP…KTCE. Positions 288 to 328 constitute an EGF-like 5; calcium-binding domain; the sequence is DVDECALGLAQCAHGCLNTQGSFKCVCHAGYELGADGRQCY. EGF-like domains follow at residues 334–374 and 375–412; these read IVNS…KTCI and DIDD…DGCG. Residues 415-455 enclose the EGF-like 8; calcium-binding domain; that stretch reads DVDECASGHGGCEHHCSNLAGSFQCFCEAGYRLDEDRRGCT. 24 EGF-like domains span residues 520 to 556, 564 to 599, 607 to 642, 650 to 687, 695 to 732, 740 to 774, 782 to 818, 826 to 861, 869 to 905, 913 to 948, 956 to 991, 999 to 1034, 1042 to 1077, 1085 to 1120, 1128 to 1163, 1171 to 1206, 1214 to 1250, 1258 to 1293, 1301 to 1336, 1344 to 1379, 1387 to 1422, 1430 to 1465, 1473 to 1508, and 1516 to 1551; these read FGHD…IICN, FGKN…AHCE, YGKH…RFCH, FGPG…ERCQ, FGPG…EDCG, FGVN…EDCG, WGLG…SRCQ, YGTG…LSCQ, WGPD…PRCE, YGPS…SFCE, FGLD…PRCA, FGLN…PTCL, YGKN…LACE, YAAG…DKCQ, FGVH…PHCE, FGEA…LSCE, FGKD…TGCL, YGPG…ADCS, FGPS…VRCE, FGKG…PHCE, YGAA…QACE, HGPG…QFCE, FGDG…AACD, and FGPG…PTCR. Residues 1555-1568 are compositionally biased toward polar residues; it reads TQISSSRPAPQHPS. The segment at 1555–1574 is disordered; that stretch reads TQISSSRPAPQHPSSRAMKH.

In terms of tissue distribution, expressed in lung.

It is found in the secreted. This is Multiple epidermal growth factor-like domains protein 6 (Megf6) from Rattus norvegicus (Rat).